A 382-amino-acid polypeptide reads, in one-letter code: Mannitol-1-phosphate 5-dehydrogenase (382 aa).

3-14 (ALHFGAGNIGRG) is an NAD(+) binding site.

The protein belongs to the mannitol dehydrogenase family.

The catalysed reaction is D-mannitol 1-phosphate + NAD(+) = beta-D-fructose 6-phosphate + NADH + H(+). This chain is Mannitol-1-phosphate 5-dehydrogenase, found in Klebsiella pneumoniae (strain 342).